Consider the following 711-residue polypeptide: Polyribonucleotide nucleotidyltransferase (711 aa).

2 residues coordinate Mg(2+): Asp-486 and Asp-492. The region spanning 553 to 612 is the KH domain; that stretch reads PRIHTIKISTDKIKDVIGKGGSVIRALTEETGTTIEIEDDGTVKIAATDGEKAKYAIRRI. An S1 motif domain is found at 622-690; it reads GRIYNGKVTR…RQGRVRLSIK (69 aa). The segment at 690–711 is disordered; the sequence is KEATEQSQPAAAPEAPASEQAE. The segment covering 694-711 has biased composition (low complexity); that stretch reads EQSQPAAAPEAPASEQAE.

The protein belongs to the polyribonucleotide nucleotidyltransferase family. Component of the RNA degradosome, which is a multiprotein complex involved in RNA processing and mRNA degradation. It depends on Mg(2+) as a cofactor.

The protein localises to the cytoplasm. It carries out the reaction RNA(n+1) + phosphate = RNA(n) + a ribonucleoside 5'-diphosphate. Functionally, involved in mRNA degradation. Catalyzes the phosphorolysis of single-stranded polyribonucleotides processively in the 3'- to 5'-direction. The chain is Polyribonucleotide nucleotidyltransferase from Salmonella choleraesuis (strain SC-B67).